The following is a 95-amino-acid chain: Small ribosomal subunit protein bS18 (95 aa).

It belongs to the bacterial ribosomal protein bS18 family. As to quaternary structure, part of the 30S ribosomal subunit. Forms a tight heterodimer with protein bS6.

Binds as a heterodimer with protein bS6 to the central domain of the 16S rRNA, where it helps stabilize the platform of the 30S subunit. The protein is Small ribosomal subunit protein bS18 of Rickettsia akari (strain Hartford).